The following is a 367-amino-acid chain: Porin Omp2a (367 aa).

The signal sequence occupies residues 1-22 (MNIKSLLLGSAAALVAASGAQA).

It belongs to the alphaproteobacteria porin family. As to quaternary structure, monomer.

It is found in the cell outer membrane. Functionally, forms passive diffusion pores that allow small molecular weight hydrophilic materials across the outer membrane. The polypeptide is Porin Omp2a (omp2a) (Brucella melitensis biotype 1 (strain ATCC 23456 / CCUG 17765 / NCTC 10094 / 16M)).